We begin with the raw amino-acid sequence, 91 residues long: Small ribosomal subunit protein bS16c (91 aa).

The protein belongs to the bacterial ribosomal protein bS16 family.

It is found in the plastid. Its subcellular location is the chloroplast. This chain is Small ribosomal subunit protein bS16c, found in Pelargonium hortorum (Common geranium).